The sequence spans 324 residues: Succinylglutamate desuccinylase (324 aa).

Residues histidine 53, glutamate 56, and histidine 148 each contribute to the Zn(2+) site. Residue glutamate 211 is part of the active site.

The protein belongs to the AspA/AstE family. Succinylglutamate desuccinylase subfamily. It depends on Zn(2+) as a cofactor.

The enzyme catalyses N-succinyl-L-glutamate + H2O = L-glutamate + succinate. It participates in amino-acid degradation; L-arginine degradation via AST pathway; L-glutamate and succinate from L-arginine: step 5/5. Functionally, transforms N(2)-succinylglutamate into succinate and glutamate. The sequence is that of Succinylglutamate desuccinylase from Acinetobacter baumannii (strain SDF).